The following is a 140-amino-acid chain: Tumor protein D55 (140 aa).

The tract at residues 1–28 (MPHARTETSVGTYESHSTSELEDLTEPE) is disordered. Over residues 7–18 (ETSVGTYESHST) the composition is skewed to polar residues. The stretch at 28–57 (EQRELKTKLTKLEAEIVTLRHVLAAKERRC) forms a coiled coil.

It belongs to the TPD52 family. In terms of assembly, interacts with TPD52L2. As to expression, specifically expressed in testis. Expressed at 5.6-fold higher levels in adult testis than in fetal testis.

This chain is Tumor protein D55 (TPD52L3), found in Homo sapiens (Human).